The chain runs to 1019 residues: UPF0182 protein Krad_1193 (1019 aa).

A run of 7 helical transmembrane segments spans residues 19 to 39 (GAAL…VVGA), 61 to 81 (LWLQ…AVAV), 115 to 135 (RLVV…VAMS), 169 to 189 (WLAF…IAGL), 213 to 233 (VHLA…YWLD), 264 to 284 (AILA…AVGT), and 291 to 311 (IGTG…PWAV). Disordered regions lie at residues 897-934 (GNSG…ATGD) and 977-1019 (DAAS…TPTP). A compositionally biased stretch (low complexity) spans 977–1005 (DAASAAEARLERSGTSGPTSSSSPSASSA). Positions 1006–1019 (PPVPGETPAATPTP) are enriched in pro residues.

Belongs to the UPF0182 family.

It localises to the cell membrane. The chain is UPF0182 protein Krad_1193 from Kineococcus radiotolerans (strain ATCC BAA-149 / DSM 14245 / SRS30216).